Consider the following 237-residue polypeptide: Concanavalin-A (237 aa).

Mn(2+) contacts are provided by Glu-8 and Asp-10. Ca(2+) contacts are provided by Asp-10, Tyr-12, Asn-14, and Asp-19. A carbohydrate is bound at residue Asn-14. Residues Asp-19 and His-24 each contribute to the Mn(2+) site. A carbohydrate-binding positions include 98-100 (GLY), Asp-208, and Arg-228.

The protein belongs to the leguminous lectin family. Homotetramer. Post-translationally, concanavalin A-like lectins of the Diocleinae subtribe undergo proteolytic processing referred to as circular permutation. The propeptide is split into an N-terminal and a C-terminal part, the gamma and beta chain, respectively. These are then religated in beta-gamma order to form the mature alpha chain. The beta and gamma chains can often be detected in cell extracts. Residues 1-118 of the mature chain, as displayed here, probably constitute the beta chain in the propeptide, residues 119-237 the gamma chain.

Glucose/D-mannose specific lectin. This chain is Concanavalin-A, found in Canavalia cathartica (Jackbean).